Here is a 122-residue protein sequence, read N- to C-terminus: Large ribosomal subunit protein uL14 (122 aa).

This sequence belongs to the universal ribosomal protein uL14 family. Part of the 50S ribosomal subunit. Forms a cluster with proteins L3 and L19. In the 70S ribosome, L14 and L19 interact and together make contacts with the 16S rRNA in bridges B5 and B8.

Its function is as follows. Binds to 23S rRNA. Forms part of two intersubunit bridges in the 70S ribosome. The polypeptide is Large ribosomal subunit protein uL14 (Aeromonas salmonicida (strain A449)).